The primary structure comprises 445 residues: Dihydroorotate dehydrogenase (quinone), mitochondrial (445 aa).

A mitochondrion-targeting transit peptide spans 1–16 (MNSGFPRILSKKLFTL). The chain crosses the membrane as a helical span at residues 39–56 (LLKYTVGIAIGSFAGFYF). FMN contacts are provided by residues 124–128 (AGLDK) and Ser148. Position 128 (Lys128) interacts with substrate. Substrate is bound at residue 173–177 (NRYGF). 2 residues coordinate FMN: Asn221 and Asn251. 251–256 (NVSSPN) contacts substrate. Ser254 (nucleophile) is an active-site residue. FMN is bound by residues Lys302 and Ser330. 331 to 332 (NT) lines the substrate pocket. FMN is bound by residues Gly356, Gly386, and 407-408 (YT).

This sequence belongs to the dihydroorotate dehydrogenase family. Type 2 subfamily. Requires FMN as cofactor.

Its subcellular location is the mitochondrion inner membrane. The catalysed reaction is (S)-dihydroorotate + a quinone = orotate + a quinol. It participates in pyrimidine metabolism; UMP biosynthesis via de novo pathway; orotate from (S)-dihydroorotate (quinone route): step 1/1. Catalyzes the conversion of dihydroorotate to orotate with quinone as electron acceptor. In Kluyveromyces lactis (strain ATCC 8585 / CBS 2359 / DSM 70799 / NBRC 1267 / NRRL Y-1140 / WM37) (Yeast), this protein is Dihydroorotate dehydrogenase (quinone), mitochondrial (URA9).